Here is a 725-residue protein sequence, read N- to C-terminus: ABC transporter G family member 7 (725 aa).

The helical transmembrane segment at Val-12 to Val-34 threads the bilayer. The 247-residue stretch at Ile-70–Pro-316 folds into the ABC transporter domain. Gly-108–Thr-115 is an ATP binding site. The 212-residue stretch at Arg-392–Phe-603 folds into the ABC transmembrane type-2 domain. The next 4 membrane-spanning stretches (helical) occupy residues Leu-446–Phe-466, Ile-493–Met-513, Gly-528–Val-548, and Ala-553–Val-573. Positions Asn-676–Leu-725 are disordered. Positions Asp-682–Lys-691 are enriched in basic and acidic residues.

This sequence belongs to the ABC transporter superfamily. ABCG family. Eye pigment precursor importer (TC 3.A.1.204) subfamily.

The protein resides in the membrane. This chain is ABC transporter G family member 7 (ABCG7), found in Arabidopsis thaliana (Mouse-ear cress).